The following is a 222-amino-acid chain: MVTLYLHVPILLLVVITARAAPKPDTHNPFDELSSVAEKQDLHYGDRSRKDPFIAQNDVGNNFRDGTQENLTKVRSKVNQYDQPFTFKCPLGETIKSIGSIHDNHYEDRQWDIDCKPAGYTMGISTWSPYANDYDGSMNFECNEGSVVTGMSSIHDNYYEDRRYQLMCSYLNNWKRGSCAWTSYTTYDASFVELTPTGKFLVGMKSQHNNYYEDRKFKMLYC.

The first 20 residues, methionine 1–alanine 20, serve as a signal peptide directing secretion. Positions alanine 21–arginine 75 are excised as a propeptide. Cystine bridges form between cysteine 89-cysteine 115, cysteine 142-cysteine 168, and cysteine 179-cysteine 222. 3 consecutive repeats follow at residues serine 100–arginine 109, serine 153–arginine 162, and serine 206–arginine 215.

Belongs to the dermatopontin family. Post-translationally, is not glycosylated.

It is found in the secreted. The protein localises to the nematocyst. Is potently cytotoxic (EC(50) value 79 ng/mL) towards L1210 mouse leukemia cells, has hemagglutination activity on sheep erythrocytes, and is lethal in crayfish. Has no phospholipase A2 activity. This Millepora dichotoma (Net fire coral) protein is Millepora cytotoxin-1.